We begin with the raw amino-acid sequence, 508 residues long: Lysine--tRNA ligase (508 aa).

Mg(2+) is bound by residues glutamate 418 and glutamate 425.

It belongs to the class-II aminoacyl-tRNA synthetase family. Homodimer. Mg(2+) is required as a cofactor.

It is found in the cytoplasm. The enzyme catalyses tRNA(Lys) + L-lysine + ATP = L-lysyl-tRNA(Lys) + AMP + diphosphate. The polypeptide is Lysine--tRNA ligase (Burkholderia ambifaria (strain MC40-6)).